The following is a 414-amino-acid chain: Ceramide synthase 5 (414 aa).

At 1 to 43 the chain is on the lumenal side; the sequence is MATAAAETLGLLWGWLWSESFWLPQNVSWADLEGPGDGYGYPR. Asn-26 carries N-linked (GlcNAc...) asparagine glycosylation. A helical membrane pass occupies residues 44 to 64; sequence AQHVLSVFPLAVCIFSVRMLF. The segment at 75 to 136 is homeobox-like; the sequence is RVGIKDSPVN…RHRRNQDKPP (62 aa). Positions 139 to 340 constitute a TLC domain; sequence TKFCESMWRF…IVQTASKALS (202 aa). 4 consecutive transmembrane segments (helical) span residues 148-168, 187-207, 214-234, and 272-292; these read FTYYLCIFCYGIRFLWSMPWF, LYYYYITQLAFYWSLMFSQFI, FLMMFIHHMIGIMLTTFSYVN, and LFVIFGAAFIVSRLAIFPLWI. The Last loop motif motif lies at 299–309; sequence ESWEIIGPYPS. The chain crosses the membrane as a helical span at residues 312 to 332; sequence LFNALLLILQVLHAIWSYLIV. Residues 333–414 are Cytoplasmic-facing; sequence QTASKALSRG…RASPHLHSCD (82 aa). A disordered region spans residues 347-373; it reads DDRSDVESSSEEEDETTHKNNLSGSSS.

In terms of assembly, interacts with PAQR4; the interaction regulates the stability and activity of CERS5 and is inhibited in presence of ceramides. Phosphorylated at the C-terminus by CK2. As to expression, ubiquitously expressed, with highest levels in testis and kidney. Expressed in pulmonary epithelia.

The protein resides in the endoplasmic reticulum membrane. The catalysed reaction is a sphingoid base + hexadecanoyl-CoA = an N-hexadecanoyl-sphingoid base + CoA + H(+). It catalyses the reaction sphinganine + hexadecanoyl-CoA = N-hexadecanoylsphinganine + CoA + H(+). It carries out the reaction hexadecasphinganine + hexadecanoyl-CoA = N-hexadecanoylhexadecasphinganine + CoA + H(+). The enzyme catalyses sphing-4-enine + hexadecanoyl-CoA = N-hexadecanoylsphing-4-enine + CoA + H(+). The catalysed reaction is 2-hydroxyhexadecanoyl-CoA + sphinganine = N-(2-hydroxyhexadecanoyl)-sphinganine + CoA + H(+). It catalyses the reaction sphinganine + tetradecanoyl-CoA = N-(tetradecanoyl)-sphinganine + CoA + H(+). It carries out the reaction sphinganine + octadecanoyl-CoA = N-(octadecanoyl)-sphinganine + CoA + H(+). The enzyme catalyses sphinganine + (9Z)-octadecenoyl-CoA = N-(9Z-octadecenoyl)-sphinganine + CoA + H(+). The catalysed reaction is a fatty acyl-CoA + sphing-4-enine = an N-acylsphing-4-enine + CoA + H(+). It catalyses the reaction tetracosenoyl-CoA + sphing-4-enine = N-(tetracosenoyl)-sphing-4-enine + CoA + H(+). Its pathway is lipid metabolism; sphingolipid metabolism. With respect to regulation, inhibited by fumonisin B1. Its function is as follows. Ceramide synthase that catalyzes the transfer of the acyl chain from acyl-CoA to a sphingoid base, with high selectivity toward palmitoyl-CoA (hexadecanoyl-CoA; C16:0-CoA). Can use other acyl donors, but with less efficiency. N-acylates sphinganine and sphingosine bases to form dihydroceramides and ceramides in de novo synthesis and salvage pathways, respectively. Plays a role in de novo ceramide synthesis and surfactant homeostasis in pulmonary epithelia. This chain is Ceramide synthase 5, found in Mus musculus (Mouse).